We begin with the raw amino-acid sequence, 434 residues long: V-type ATP synthase beta chain (434 aa).

It belongs to the ATPase alpha/beta chains family.

Its function is as follows. Produces ATP from ADP in the presence of a proton gradient across the membrane. The V-type beta chain is a regulatory subunit. In Borrelia garinii subsp. bavariensis (strain ATCC BAA-2496 / DSM 23469 / PBi) (Borreliella bavariensis), this protein is V-type ATP synthase beta chain.